We begin with the raw amino-acid sequence, 578 residues long: Cytochrome P450 monooxygenase fsoE (578 aa).

Residues 28 to 48 form a helical membrane-spanning segment; sequence LLMAVAITYAISWINWFFTSW. Cys517 contacts heme.

The protein belongs to the cytochrome P450 family. It depends on heme as a cofactor.

Its subcellular location is the membrane. It carries out the reaction 3-O-(beta-D-glucopyranosyl)-isomotiol + 2 reduced [NADPH--hemoprotein reductase] + 2 O2 = 2-deacetoxyfuscoatroside + 2 oxidized [NADPH--hemoprotein reductase] + 2 H2O + 3 H(+). The enzyme catalyses 3-O-(beta-D-glucopyranosyl)-2alpha-hydroxyisomotiol + 2 reduced [NADPH--hemoprotein reductase] + 2 O2 = 2-deacetylfuscoatroside + 2 oxidized [NADPH--hemoprotein reductase] + 2 H2O + 3 H(+). The catalysed reaction is 3-O-(beta-D-glucopyranosyl)-2alpha-acetoxyisomotiol + 2 reduced [NADPH--hemoprotein reductase] + 2 O2 = fuscoatroside + 2 oxidized [NADPH--hemoprotein reductase] + 2 H2O + 3 H(+). It catalyses the reaction isomotiol + reduced [NADPH--hemoprotein reductase] + O2 = 19beta-hydroxyisomotiol + oxidized [NADPH--hemoprotein reductase] + H2O + H(+). It carries out the reaction 2alpha-hydroxyisomotiol + reduced [NADPH--hemoprotein reductase] + O2 = 2alpha,19beta-dihydroxyisomotiol + oxidized [NADPH--hemoprotein reductase] + H2O + H(+). The enzyme catalyses 2alpha,19beta-dihydroxyisomotiol + reduced [NADPH--hemoprotein reductase] + O2 = 2alpha-hydroxyismotiol-19-one + oxidized [NADPH--hemoprotein reductase] + 2 H2O + H(+). The catalysed reaction is 2alpha-hydroxyismotiol-19-one + 2 reduced [NADPH--hemoprotein reductase] + O2 = 2-deacetyl,3-deglucopyranosyl-fuscoatroside + 2 oxidized [NADPH--hemoprotein reductase] + H2O + 3 H(+). It participates in secondary metabolite biosynthesis; terpenoid biosynthesis. Functionally, cytochrome P450 monooxygenase; part of the gene cluster that mediates the biosynthesis of the enfumafungin-type antibiotic, fuscoatroside. Within the pathway, fsoE catalyzes the oxidative cleavage of the c19-C20 bond within the E-ring, resulting in the formation of a carboxyl group and a methyl group. FsoE exhibits preferential substrate selectivity toward glycoside substrates over their aglycones. The fuscoatroside biosynthesis is initiated by the cyclization of 2,3(S)-oxidosqualene through FsoA's terpene cyclase (TC) domain, leading to the formation of the fernane skeleton isomotiol, harboring a fernane triterpene skeleton with a C8-C9 double bond. Subsequently, C2-alpha-hydroxylation mediated by fsoD results in the production of 2-alpha-hydroxy-isomotiol, which is further acetylated by fsoF. The glycosyltransferase (GT) domain of FsoA may convert isomotiol, 2-alpha-hydroxy-isomotiol, and the acetylated derivative of 2-alpha-hydroxy-isomotiol into their corresponding glycosides 3-O-(beta-D-glucopyranosyl)-isomotiol, 3-O-(beta-D-glucopyranosyl)-2-alpha-hydroxy-isomotiol, and 3-O-(beta-D-glucopyranosyl)-2-alpha-acetoxy-isomotiol, which then undergo oxidative cleavage under the action of fsoE to form s 2-deacetoxy-fuscoatroside, 2-deacetyl-fuscoatroside, and fuscoatroside, respectively. Although hydroxylation followed by acetylation of 3-O-(beta-D-glucopyranosyl)-isomotiol and 2-deacetoxy-fuscoatroside by fsoD and fsoF could not be ruled out, this process is likely to occur with difficulty due to bulky steric hindrance caused by the presence of a glycan at C3 in these compounds. Interestingly, fsoE can also utilize the aglycones isomotiol and 2-alpha-hydroxy-isomotiol as substrates to generate 19-beta-hydroxy-isomotiol and 2-alpha,19-beta-dihydroxy-isomotiol, respectively. These reactions occur with lower efficiency. Finally, fsoE can further convert 2-alpha,19-beta-dihydroxy-isomotiol into 2-alpha-hydroxy-ismotiol-19-one and 2-alpha-hydroxy-ismotiol-19-one into 2-deacetyl-3-deglucopyranosyl-fuscoatroside. In Humicola fuscoatra, this protein is Cytochrome P450 monooxygenase fsoE.